A 749-amino-acid polypeptide reads, in one-letter code: DNA topoisomerase 1 (749 aa).

Positions 1–110 (MSDSEDVALS…PKKEDSVETD (110 aa)) are disordered. Residues 62–75 (LSKEKVNNKVKDEL) are compositionally biased toward basic and acidic residues. Residues 79-94 (PVTPKKTPKISKTPVS) are compositionally biased toward low complexity. The span at 101–110 (PKKEDSVETD) shows a compositional bias: basic and acidic residues. 3 interaction with DNA regions span residues 338–339 (KY), 401–406 (RAGGEK), and 493–495 (TAK). Residues 345 to 749 (NSSIKGISDM…IESTDENWRF (405 aa)) enclose the Topo IB-type catalytic domain. Residue Y707 is the O-(3'-phospho-DNA)-tyrosine intermediate of the active site.

This sequence belongs to the type IB topoisomerase family.

It localises to the nucleus. It is found in the nucleolus. The protein localises to the nucleoplasm. It catalyses the reaction ATP-independent breakage of single-stranded DNA, followed by passage and rejoining.. Releases the supercoiling and torsional tension of DNA introduced during the DNA replication and transcription by transiently cleaving and rejoining one strand of the DNA duplex. Introduces a single-strand break via transesterification at the specific target site 5'-[CT]CCTTp site in duplex DNA. The scissile phosphodiester is attacked by the catalytic tyrosine of the enzyme, resulting in the formation of a DNA-(3'-phosphotyrosyl)-enzyme intermediate and the expulsion of a 5'-OH DNA strand. The free DNA strand then undergoes passage around the unbroken strand thus removing DNA supercoils. Finally, in the religation step, the DNA 5'-OH attacks the covalent intermediate to expel the active-site tyrosine and restore the DNA phosphodiester backbone. This chain is DNA topoisomerase 1 (TOP1), found in Candidozyma auris (Yeast).